A 113-amino-acid polypeptide reads, in one-letter code: Sperm-associated antigen 11B (113 aa).

A signal peptide spans 1–26; it reads MIPRLLPFFASLLFAALLFPGLSNAS. 3 cysteine pairs are disulfide-bonded: Cys-80/Cys-108, Cys-87/Cys-101, and Cys-91/Cys-109.

It belongs to the beta-defensin family.

It is found in the secreted. Functionally, has antimicrobial activity against E.coli. Plays a role in the defense response in the male reproductive tract, contributing to sperm maturation, storage and protection. This Mus musculus (Mouse) protein is Sperm-associated antigen 11B.